The sequence spans 218 residues: Glycoprotein UL1 (218 aa).

Positions 1 to 27 (MGVQCNSKLLLLAVLITIILSSILVQA) are cleaved as a signal peptide. Residues 178–198 (VATHVGWTATVVIIICVLTYV) form a helical membrane-spanning segment.

It belongs to the RL11 family.

It localises to the virion membrane. In Homo sapiens (Human), this protein is Glycoprotein UL1 (UL1).